The primary structure comprises 491 residues: Ubiquitin carboxyl-terminal hydrolase 30 (491 aa).

The Mitochondrial intermembrane portion of the chain corresponds to 1-31; the sequence is MPWCKQGTTDKLVREFLRTGAAARNKMMKNW. Residues 32 to 52 traverse the membrane as a helical segment; sequence GVIGGIAAAMAAGVYVLWGPI. Over 53–491 the chain is Cytoplasmic; it reads SDRRKKRKGM…MQRPGLRVEE (439 aa). Residues 64 to 482 enclose the USP domain; the sequence is PGLLNLGNTC…SAYLLFYERM (419 aa). The active-site Nucleophile is the Cys-73. Polar residues predominate over residues 346–355; that stretch reads AQSQQKTSRT. The segment at 346 to 365 is disordered; the sequence is AQSQQKTSRTNKAKASADPK. The active-site Proton acceptor is the His-432.

It belongs to the peptidase C19 family.

It is found in the mitochondrion outer membrane. The enzyme catalyses Thiol-dependent hydrolysis of ester, thioester, amide, peptide and isopeptide bonds formed by the C-terminal Gly of ubiquitin (a 76-residue protein attached to proteins as an intracellular targeting signal).. In terms of biological role, deubiquitinating enzyme that acts as a key inhibitor of mitophagy by counteracting the action of parkin (PRKN). The chain is Ubiquitin carboxyl-terminal hydrolase 30 (usp30) from Danio rerio (Zebrafish).